A 375-amino-acid chain; its full sequence is Beta sliding clamp (375 aa).

This sequence belongs to the beta sliding clamp family. As to quaternary structure, forms a ring-shaped head-to-tail homodimer around DNA which binds and tethers DNA polymerases and other proteins to the DNA. The DNA replisome complex has a single clamp-loading complex (3 tau and 1 each of delta, delta', psi and chi subunits) which binds 3 Pol III cores (1 core on the leading strand and 2 on the lagging strand) each with a beta sliding clamp dimer. Additional proteins in the replisome are other copies of gamma, psi and chi, Ssb, DNA helicase and RNA primase.

The protein resides in the cytoplasm. In terms of biological role, confers DNA tethering and processivity to DNA polymerases and other proteins. Acts as a clamp, forming a ring around DNA (a reaction catalyzed by the clamp-loading complex) which diffuses in an ATP-independent manner freely and bidirectionally along dsDNA. Initially characterized for its ability to contact the catalytic subunit of DNA polymerase III (Pol III), a complex, multichain enzyme responsible for most of the replicative synthesis in bacteria; Pol III exhibits 3'-5' exonuclease proofreading activity. The beta chain is required for initiation of replication as well as for processivity of DNA replication. The protein is Beta sliding clamp (dnaN) of Synechococcus elongatus (strain ATCC 33912 / PCC 7942 / FACHB-805) (Anacystis nidulans R2).